The following is a 525-amino-acid chain: Cytochrome P450 4V2 (525 aa).

The helical transmembrane segment at 13–33 (LLLWGAASAVSVAGATVLLNI) threads the bilayer. Heme-binding residues include Glu-329 and Cys-467.

Belongs to the cytochrome P450 family. Heme serves as cofactor.

It is found in the endoplasmic reticulum membrane. It carries out the reaction dodecanoate + reduced [NADPH--hemoprotein reductase] + O2 = 12-hydroxydodecanoate + oxidized [NADPH--hemoprotein reductase] + H2O + H(+). The catalysed reaction is tetradecanoate + reduced [NADPH--hemoprotein reductase] + O2 = 14-hydroxytetradecanoate + oxidized [NADPH--hemoprotein reductase] + H2O + H(+). It catalyses the reaction hexadecanoate + reduced [NADPH--hemoprotein reductase] + O2 = 16-hydroxyhexadecanoate + oxidized [NADPH--hemoprotein reductase] + H2O + H(+). The enzyme catalyses (5Z,8Z,11Z,14Z,17Z)-eicosapentaenoate + reduced [NADPH--hemoprotein reductase] + O2 = 20-hydroxy-(5Z,8Z,11Z,14Z,17Z)-eicosapentaenoate + oxidized [NADPH--hemoprotein reductase] + H2O + H(+). It carries out the reaction (4Z,7Z,10Z,13Z,16Z,19Z)-docosahexaenoate + reduced [NADPH--hemoprotein reductase] + O2 = 22-hydroxy-(4Z,7Z,10Z,13Z,16Z,19Z)-docosahexaenoate + oxidized [NADPH--hemoprotein reductase] + H2O + H(+). It participates in lipid metabolism; fatty acid metabolism. Inhibited by N-hydroxy-N'-(4-n-butyl-2-methylphenyl formamidine)(HET0016) with an IC(50) of 38 nM. In terms of biological role, a cytochrome P450 monooxygenase involved in fatty acid metabolism in the eye. Catalyzes the omega-hydroxylation of polyunsaturated fatty acids (PUFAs) docosahexaenoate (DHA) and its precursor eicosapentaenoate (EPA), and may contribute to the homeostasis of these retinal PUFAs. Omega hydroxylates saturated fatty acids such as laurate, myristate and palmitate, the catalytic efficiency decreasing in the following order: myristate &gt; laurate &gt; palmitate (C14&gt;C12&gt;C16). Mechanistically, uses molecular oxygen inserting one oxygen atom into a substrate, and reducing the second into a water molecule, with two electrons provided by NADPH via cytochrome P450 reductase (CPR; NADPH-ferrihemoprotein reductase). In Rattus norvegicus (Rat), this protein is Cytochrome P450 4V2 (Cyp4v2).